Reading from the N-terminus, the 63-residue chain is Small ribosomal subunit protein eS17 (63 aa).

Belongs to the eukaryotic ribosomal protein eS17 family.

The sequence is that of Small ribosomal subunit protein eS17 from Methanosphaerula palustris (strain ATCC BAA-1556 / DSM 19958 / E1-9c).